The following is a 115-amino-acid chain: Large ribosomal subunit protein bL20 (115 aa).

Belongs to the bacterial ribosomal protein bL20 family.

Binds directly to 23S ribosomal RNA and is necessary for the in vitro assembly process of the 50S ribosomal subunit. It is not involved in the protein synthesizing functions of that subunit. The polypeptide is Large ribosomal subunit protein bL20 (Mycoplasmoides gallisepticum (strain R(low / passage 15 / clone 2)) (Mycoplasma gallisepticum)).